The sequence spans 439 residues: Cysteine--tRNA ligase (439 aa).

Position 26 (Cys-26) interacts with Zn(2+). The 'HIGH' region motif lies at 28–38 (PTVYNHVHIGN). 3 residues coordinate Zn(2+): Cys-206, His-231, and Glu-235. The short motif at 263–267 (KMSKS) is the 'KMSKS' region element. ATP is bound at residue Lys-266.

The protein belongs to the class-I aminoacyl-tRNA synthetase family. As to quaternary structure, monomer. The cofactor is Zn(2+).

The protein localises to the cytoplasm. It catalyses the reaction tRNA(Cys) + L-cysteine + ATP = L-cysteinyl-tRNA(Cys) + AMP + diphosphate. The polypeptide is Cysteine--tRNA ligase (Malacoplasma penetrans (strain HF-2) (Mycoplasma penetrans)).